A 337-amino-acid polypeptide reads, in one-letter code: DNA-directed RNA polymerase subunit alpha (337 aa).

The tract at residues 1–233 is alpha N-terminal domain (alpha-NTD); the sequence is MIQKNWQELI…DQLSIFVNFE (233 aa). Positions 249–337 are alpha C-terminal domain (alpha-CTD); that stretch reads FNPALLKKVD…DLAKRYEDQY (89 aa).

The protein belongs to the RNA polymerase alpha chain family. As to quaternary structure, homodimer. The RNAP catalytic core consists of 2 alpha, 1 beta, 1 beta' and 1 omega subunit. When a sigma factor is associated with the core the holoenzyme is formed, which can initiate transcription.

The catalysed reaction is RNA(n) + a ribonucleoside 5'-triphosphate = RNA(n+1) + diphosphate. DNA-dependent RNA polymerase catalyzes the transcription of DNA into RNA using the four ribonucleoside triphosphates as substrates. The sequence is that of DNA-directed RNA polymerase subunit alpha from Brucella ovis (strain ATCC 25840 / 63/290 / NCTC 10512).